Consider the following 105-residue polypeptide: Urease subunit gamma (105 aa).

It belongs to the urease gamma subunit family. Heterotrimer of UreA (gamma), UreB (beta) and UreC (alpha) subunits. Three heterotrimers associate to form the active enzyme.

It is found in the cytoplasm. The catalysed reaction is urea + 2 H2O + H(+) = hydrogencarbonate + 2 NH4(+). It functions in the pathway nitrogen metabolism; urea degradation; CO(2) and NH(3) from urea (urease route): step 1/1. The protein is Urease subunit gamma of Bacillus subtilis (strain 168).